The chain runs to 603 residues: MLSPERRPSMAERRPSFFSFTQNPSPLVVPHLAGIEDPLPATTPDKVDVLIAGTGMVESVLAAALAWQGSNVLHIDKNDYYGDTSATLTVDQIKRWVNEVNEGSVSCYKNAKLYVSTLIGSGKYSSRDFGIDLSPKILFAKSDLLSILIKSRVHQYLEFQSLSNFHTYENDCFEKLTNTKQEIFTDQNLPLMTKRNLMKFIKFVLNWEAQTEIWQPYAERTMSDFLGEKFKLEKPQVFELIFSIGLCYDLNVKVPEALQRIRRYLTSFDVYGPFPALCSKYGGPGELSQGFCRSAAVGGATYKLNEKLVSFNPTTKVATFQDGSKVEVSEKVIISPTQAPKDSKHVPQQQYQVHRLTCIVENPCTEWFNEGESAAMVVFPPGSLKSGNKEVVQAFILGAGSEICPEGTIVWYLSTTEQGPRAEMDIDAALEAMEMALLRESSSGLENDEEIVQLTGNGHTIVNSVKLGQSFKEYVPRERLQFLFKLYYTQYTSTPPFGVVNSSFFDVNQDLEKKYIPGASDNGVIYTTMPSAEISYDEVVTAAKVLYEKIVGSDDDFFDLDFEDEDEIQASGVANAEQFENAIDDDDDVNMEGSGEFVGEMEI.

Serine 470 carries the post-translational modification Phosphoserine.

It belongs to the Rab GDI family.

In terms of biological role, substrate-binding subunit (component A) of the Rab geranylgeranyltransferase (GGTase) complex. Binds unprenylated Rab proteins and presents the substrate peptide to the catalytic component B. The component A is thought to be regenerated by transferring its prenylated Rab back to the donor membrane. The polypeptide is Rab proteins geranylgeranyltransferase component A (MRS6) (Saccharomyces cerevisiae (strain ATCC 204508 / S288c) (Baker's yeast)).